The primary structure comprises 245 residues: 1-(5-phosphoribosyl)-5-[(5-phosphoribosylamino)methylideneamino] imidazole-4-carboxamide isomerase (245 aa).

Asp8 (proton acceptor) is an active-site residue. The active-site Proton donor is the Asp130.

Belongs to the HisA/HisF family.

The protein localises to the cytoplasm. It catalyses the reaction 1-(5-phospho-beta-D-ribosyl)-5-[(5-phospho-beta-D-ribosylamino)methylideneamino]imidazole-4-carboxamide = 5-[(5-phospho-1-deoxy-D-ribulos-1-ylimino)methylamino]-1-(5-phospho-beta-D-ribosyl)imidazole-4-carboxamide. It participates in amino-acid biosynthesis; L-histidine biosynthesis; L-histidine from 5-phospho-alpha-D-ribose 1-diphosphate: step 4/9. This Pseudomonas putida (strain GB-1) protein is 1-(5-phosphoribosyl)-5-[(5-phosphoribosylamino)methylideneamino] imidazole-4-carboxamide isomerase.